The chain runs to 475 residues: Gamma-aminobutyric acid receptor subunit gamma-2 (475 aa).

An N-terminal signal peptide occupies residues 1–39 (MSSPNIWSTGSSVYSTPVFSQKMTLWILLLLSLYPGLTR). Residues 41-275 (KSDDDYEDYA…FDLSRRMGYF (235 aa)) lie on the Extracellular side of the membrane. 2 N-linked (GlcNAc...) asparagine glycosylation sites follow: N52 and N129. A disulfide bond links C190 and C204. A glycan (N-linked (GlcNAc...) asparagine) is linked at N247. Residues 276-296 (TIQTYIPCTLIVVLSWVSFWI) traverse the membrane as a helical segment. At 297–302 (NKDAVP) the chain is on the cytoplasmic side. Residues 303–322 (ARTSLGITTVLTMTTLSTIA) form a helical membrane-spanning segment. The Extracellular portion of the chain corresponds to 323-334 (RKSLPKVSYVTA). A helical membrane pass occupies residues 335–359 (MDLFVSVCFIFVFSALVEYGTLHYF). The Cytoplasmic segment spans residues 360–451 (VSNRKPSKDK…IHIRIAKMDS (92 aa)). S382 is subject to Phosphoserine; by PKC. The chain crosses the membrane as a helical span at residues 452 to 472 (YARIFFPTAFCLFNLVYWVSY). Topologically, residues 473-475 (LYL) are extracellular.

It belongs to the ligand-gated ion channel (TC 1.A.9) family. Gamma-aminobutyric acid receptor (TC 1.A.9.5) subfamily. GABRG2 sub-subfamily. In terms of assembly, heteropentamer, formed by a combination of alpha (GABRA1-6), beta (GABRB1-3), gamma (GABRG1-3), delta (GABRD), epsilon (GABRE), rho (GABRR1-3), pi (GABRP) and theta (GABRQ) chains, each subunit exhibiting distinct physiological and pharmacological properties. Interacts with GABARAP. Interacts with KIF21B. Identified in a complex of 720 kDa composed of LHFPL4, NLGN2, GABRA1, GABRB2, GABRG2 and GABRB3. Interacts with LHFPL4. Interacts with SHISA7; interaction leads to the regulation of GABA(A) receptor trafficking, channel deactivation kinetics and pharmacology. In terms of processing, palmitoylated by ZDHHC3/GODZ; required for the accumulation of GABA(A) receptors at the postsynaptic membrane of inhibitory GABAergic synapses. Post-translationally, glycosylated.

It is found in the postsynaptic cell membrane. It localises to the cell membrane. The protein localises to the cell projection. Its subcellular location is the dendrite. The protein resides in the cytoplasmic vesicle membrane. It carries out the reaction chloride(in) = chloride(out). With respect to regulation, allosterically activated by benzodiazepines. Activated by pentobarbital. Inhibited by the antagonist bicuculline. Inhibited by zinc ions. Potentiated by histamine. Its function is as follows. Gamma subunit of the heteropentameric ligand-gated chloride channel gated by gamma-aminobutyric acid (GABA), a major inhibitory neurotransmitter in the brain. GABA-gated chloride channels, also named GABA(A) receptors (GABAAR), consist of five subunits arranged around a central pore and contain GABA active binding site(s) located at the alpha and beta subunit interface(s). When activated by GABA, GABAARs selectively allow the flow of chloride anions across the cell membrane down their electrochemical gradient. Gamma-2/GABRG2-containing GABAARs are found at both synaptic and extrasynaptic sites. Chloride influx into the postsynaptic neuron following GABAAR opening decreases the neuron ability to generate a new action potential, thereby reducing nerve transmission. GABAARs containing alpha-1 and beta-2 or -3 subunits exhibit synaptogenic activity; the gamma-2 subunit being necessary but not sufficient to induce rapid synaptic contacts formation. Extrasynaptic gamma-2-containing receptors contribute to the tonic GABAergic inhibition. GABAARs function also as histamine receptor where histamine binds at the interface of two neighboring beta subunits and potentiates GABA response in a gamma-2 subunit-controlled manner. The chain is Gamma-aminobutyric acid receptor subunit gamma-2 (GABRG2) from Bos taurus (Bovine).